We begin with the raw amino-acid sequence, 196 residues long: UPF0319 protein VV1_0237 (196 aa).

The N-terminal stretch at 1–19 (MKKMMILSALALFSSSLFA) is a signal peptide.

The protein belongs to the UPF0319 family.

The protein is UPF0319 protein VV1_0237 of Vibrio vulnificus (strain CMCP6).